Consider the following 244-residue polypeptide: EKC/KEOPS complex subunit Tp53rkb (244 aa).

The region spanning 24–244 is the Protein kinase domain; that stretch reads LSGLELVQQG…LRGRKRSMVG (221 aa). Ser-25 is subject to Phosphoserine. Residues 30 to 38 and Lys-51 each bind ATP; that span reads VQQGAEARV. The Nuclear localization signal signature appears at 69-86; it reads RRRTVQEARALLRCRRAG. Asp-153 functions as the Proton acceptor in the catalytic mechanism.

It belongs to the protein kinase superfamily. BUD32 family. As to quaternary structure, component of the EKC/KEOPS complex composed of at least GON7, TP53RK, TPRKB, OSGEP and LAGE3; the whole complex dimerizes.

It is found in the nucleus. The catalysed reaction is L-seryl-[protein] + ATP = O-phospho-L-seryl-[protein] + ADP + H(+). The enzyme catalyses L-threonyl-[protein] + ATP = O-phospho-L-threonyl-[protein] + ADP + H(+). Its function is as follows. Component of the EKC/KEOPS complex that is required for the formation of a threonylcarbamoyl group on adenosine at position 37 (t(6)A37) in tRNAs that read codons beginning with adenine. The complex is probably involved in the transfer of the threonylcarbamoyl moiety of threonylcarbamoyl-AMP (TC-AMP) to the N6 group of A37. TP53RK has ATPase activity in the context of the EKC/KEOPS complex and likely plays a supporting role to the catalytic subunit OSGEP. Atypical protein kinase that phosphorylates 'Ser-15' of p53/TP53 protein and may therefore participate in its activation. This Mus musculus (Mouse) protein is EKC/KEOPS complex subunit Tp53rkb.